The primary structure comprises 128 residues: Cytochrome c-type biogenesis protein CcmE (128 aa).

Residues 1–8 lie on the Cytoplasmic side of the membrane; it reads MQKRVRNR. The chain crosses the membrane as a helical; Signal-anchor for type II membrane protein span at residues 9 to 29; it reads LITIIICFCSAALGISIVLYN. Residues 30 to 128 are Periplasmic-facing; it reads LEKNIVFFLP…KHDENYRPPS (99 aa). Residues histidine 120 and tyrosine 124 each contribute to the heme site.

This sequence belongs to the CcmE/CycJ family.

It is found in the cell inner membrane. In terms of biological role, heme chaperone required for the biogenesis of c-type cytochromes. Transiently binds heme delivered by CcmC and transfers the heme to apo-cytochromes in a process facilitated by CcmF and CcmH. In Rickettsia felis (strain ATCC VR-1525 / URRWXCal2) (Rickettsia azadi), this protein is Cytochrome c-type biogenesis protein CcmE.